The primary structure comprises 146 residues: Hemoglobin subunit beta-2 (146 aa).

The Globin domain occupies 2–146 (HWTAEEKQLI…VAHALARRYH (145 aa)). Heme b contacts are provided by His63 and His92.

This sequence belongs to the globin family. In terms of assembly, heterotetramer of two alpha chains and two beta chains. As to expression, red blood cells.

Functionally, involved in oxygen transport from the lung to the various peripheral tissues. This is Hemoglobin subunit beta-2 from Iguana iguana (Common iguana).